Here is a 149-residue protein sequence, read N- to C-terminus: Large ribosomal subunit protein uL11 (149 aa).

The protein belongs to the universal ribosomal protein uL11 family. In terms of assembly, part of the ribosomal stalk of the 50S ribosomal subunit. Interacts with L10 and the large rRNA to form the base of the stalk. L10 forms an elongated spine to which L12 dimers bind in a sequential fashion forming a multimeric L10(L12)X complex. Post-translationally, one or more lysine residues are methylated.

In terms of biological role, forms part of the ribosomal stalk which helps the ribosome interact with GTP-bound translation factors. The polypeptide is Large ribosomal subunit protein uL11 (Methylobacterium sp. (strain 4-46)).